The chain runs to 233 residues: B-cell lymphoma/leukemia 10 (233 aa).

Met-1 bears the N-acetylmethionine mark. The CARD domain maps to 13 to 101 (LTEVKKDALE…QNFLIQKITD (89 aa)). Residues Lys-17, Lys-31, and Lys-63 each participate in a glycyl lysine isopeptide (Lys-Gly) (interchain with G-Cter in ubiquitin) cross-link. Over residues 130–141 (TNNLSRSNSDES) the composition is skewed to polar residues. Disordered regions lie at residues 130–149 (TNNL…KQRP) and 186–233 (SFSS…LSRQ). Ser-138 carries the phosphoserine modification. Residues 195-205 (PGDPGAPPLPP) are compositionally biased toward pro residues.

In terms of assembly, homomultimer; homooligomerized following recruitment by CARD domain-containing proteins that form a nucleating helical template that recruits BCL10 via CARD-CARD interaction. Self-associates by CARD-CARD interaction and interacts with other CARD-proteins such as CARD9, CARD10, CARD11 and CARD14. Forms a complex with CARD14 and MALT1; resulting in the formation of a CBM (CARD14-BCL10-MALT1) complex. Forms a complex with CARD11 and MALT1; resulting in the formation of a CBM (CARD11-BCL10-MALT1) complex. Forms a complex with CARD9 and MALT1; resulting in the formation of a CBM (CARD9-BCL10-MALT1) complex. Found in a membrane raft complex, at least composed of BCL10, CARD11, DPP4 and IKBKB. Binds caspase-9 with its C-terminal domain. Interacts with TRAF2 and BIRC2/c-IAP2. Interacts with PELI2 and SOCS3; these interactions may be mutually exclusive. In terms of processing, phosphorylated. Phosphorylation results in dissociation from TRAF2 and binding to BIRC2/c-IAP2. Phosphorylated by IKBKB/IKKB. Post-translationally, ubiquitinated via both 'Lys-63'-linked and linear ('Met-1'-linked) polyubiquitin chains in response to T-cell receptor (TCR) activation. Ubiquitination is recognized by IKBKG/NEMO, the regulatory subunit of I-kappa-B kinase (IKK), and is required for TCR-induced NF-kappa-B activation. Linear ubiquitination at Lys-17, Lys-31 and Lys-63 is mediated by RNF31/HOIP; linear ubiquitination is recognized with much higher affinity than 'Lys-63'-linked ubiquitin by IKBKG/NEMO. CARD11 is required for linear ubiquitination by HOIP by promoting the targeting of BCL10 to RNF31/HOIP. Proteolytically cleaved by MALT1; required for T-cell activation.

It localises to the cytoplasm. Its subcellular location is the perinuclear region. It is found in the membrane raft. Its function is as follows. Plays a key role in both adaptive and innate immune signaling by bridging CARD domain-containing proteins to immune activation. Acts by channeling adaptive and innate immune signaling downstream of CARD domain-containing proteins CARD9, CARD11 and CARD14 to activate NF-kappa-B and MAP kinase p38 (MAPK11, MAPK12, MAPK13 and/or MAPK14) pathways which stimulate expression of genes encoding pro-inflammatory cytokines and chemokines. Recruited by activated CARD domain-containing proteins: homooligomerized CARD domain-containing proteins form a nucleating helical template that recruits BCL10 via CARD-CARD interaction, thereby promoting polymerization of BCL10, subsequent recruitment of MALT1 and formation of a CBM complex. This leads to activation of NF-kappa-B and MAP kinase p38 (MAPK11, MAPK12, MAPK13 and/or MAPK14) pathways which stimulate expression of genes encoding pro-inflammatory cytokines and chemokines. Activated by CARD9 downstream of C-type lectin receptors; CARD9-mediated signals are essential for antifungal immunity. Activated by CARD11 downstream of T-cell receptor (TCR) and B-cell receptor (BCR). Promotes apoptosis, pro-caspase-9 maturation and activation of NF-kappa-B via NIK and IKK. The chain is B-cell lymphoma/leukemia 10 from Rattus norvegicus (Rat).